The chain runs to 292 residues: uncharacterized protein (292 aa).

10 helical membrane-spanning segments follow: residues Leu-6 to Ile-26, Leu-32 to Ile-52, Ile-68 to Phe-88, Thr-94 to Asn-114, Met-123 to Ile-143, Ala-147 to Phe-167, Ala-182 to Val-202, Ser-214 to Leu-234, Ala-242 to His-262, and Ile-265 to Phe-285. EamA domains are found at residues Leu-13–Gly-137 and Leu-159–Phe-285.

It belongs to the EamA transporter family.

Its subcellular location is the cell membrane. This is an uncharacterized protein from Bacillus subtilis (strain 168).